A 24-amino-acid chain; its full sequence is Brevinin-1GRa (24 aa).

As to expression, expressed by the skin glands.

Its subcellular location is the secreted. Its function is as follows. Antimicrobial peptide active against the Gram-positive bacterium S.aureus (MIC=12.5 uM) and against the Gram-negative bacteria E.coli (MIC=25 uM). In Odorrana grahami (Yunnanfu frog), this protein is Brevinin-1GRa.